Here is a 317-residue protein sequence, read N- to C-terminus: Hps1-dma1 cluster cytochrome P450 monooxygenase cyp3.1 (317 aa).

The tract at residues 183–205 (PAIETDRKTSSHSRSPTALADKQ) is disordered. C260 serves as a coordination point for heme.

This sequence belongs to the cytochrome P450 family. Heme is required as a cofactor.

Its pathway is secondary metabolite biosynthesis. Its function is as follows. Cytochrome P450 monooxygenase; part of the hps1-dma1 gene cluster that probably mediates the biosynthesis a derivative of cyclopiazonic acid (CPA). The hybrid polyketide synthase-nonribosomal peptide synthetase (PKS-NRPS) nps1 might incorporates acetyl-CoA, malonyl-CoA, and tryptophan (Trp) and utilizes a C-terminal redox-incompetent reductase domain to make and release the tryptophan tetramic acid, cyclo-acetoacetyl-L-tryptophan (c-AATrp), as the first intermediate in the pathway. In addition, the cluster also includes the tryptophan dimethylallyltransferase dma1, the FAD-dependent oxidoreductase toxD, the cytochrome P450 monooxygenase cyp3.1 and the methyltransferase DOTSEDRAFT_139328; the latter 2 being not present in all CPA-producing fungi but involved in additional modifications that occur in biosynthesis the of a range of CPA and CPA-like products. Further studies are required to clarify whether the CPA-like hps1-dma1 cluster is functional or a non-functional relic reflecting evolution of D.septosporum. The polypeptide is Hps1-dma1 cluster cytochrome P450 monooxygenase cyp3.1 (cyp3.1) (Dothistroma septosporum (strain NZE10 / CBS 128990) (Red band needle blight fungus)).